We begin with the raw amino-acid sequence, 681 residues long: Sterile alpha motif domain-containing protein 11 (681 aa).

Disordered regions lie at residues 41-77 (RNLKKERTPSFSASDGDSDGSGPTCGRRPGLKQEDGP), 212-234 (YHLGLPSHGEDPPWHDPPHHLPS), 251-307 (GPSG…APHV), and 407-498 (LLAL…GAEG). Residue Lys72 forms a Glycyl lysine isopeptide (Lys-Gly) (interchain with G-Cter in SUMO2) linkage. A compositionally biased stretch (basic and acidic residues) spans 219–234 (HGEDPPWHDPPHHLPS). A compositionally biased stretch (pro residues) spans 412–423 (PQGPPGSGPPTP). At Thr485 the chain carries Phosphothreonine. Residues 543–608 (WTVDDVCSFV…AQVARRLGRV (66 aa)) form the SAM domain. Residues 625-681 (LRAPERELGTGEQPLSPTTATSPYGGGHALAGQTSPKQENGTLALLPGAPDPSQPLC) are disordered. Polar residues-rich tracts occupy residues 637 to 646 (QPLSPTTATS) and 656 to 665 (GQTSPKQENG). A Phosphoserine modification is found at Ser640.

As to quaternary structure, self-associates. Component of a Polycomb group (PcG) multiprotein PRC1-like complex. Interacts with SAMD7 and PHC2. Expressed in the outer and inner nuclear layers, ganglion cell layer and rod photoreceptors of the retina (at protein level). Widely expressed, showing the highest expression in kidney, prostate and retina.

The protein resides in the nucleus. Functionally, component of a Polycomb group (PcG) multiprotein PRC1-like complex, essential for establishing rod photoreceptor cell identity and function by silencing nonrod gene expression in developing rod photoreceptor cells. This Homo sapiens (Human) protein is Sterile alpha motif domain-containing protein 11 (SAMD11).